Reading from the N-terminus, the 103-residue chain is Large ribosomal subunit protein bL21 (103 aa).

It belongs to the bacterial ribosomal protein bL21 family. In terms of assembly, part of the 50S ribosomal subunit. Contacts protein L20.

Its function is as follows. This protein binds to 23S rRNA in the presence of protein L20. The sequence is that of Large ribosomal subunit protein bL21 from Ectopseudomonas mendocina (strain ymp) (Pseudomonas mendocina).